We begin with the raw amino-acid sequence, 548 residues long: Peptide chain release factor 3 (548 aa).

Positions 23–290 constitute a tr-type G domain; sequence ERRRTFGIIS…ALLDWAPPPQ (268 aa). GTP contacts are provided by residues 32–39, 100–104, and 154–157; these read SHPDAGKT, DTPGH, and NKMD.

It belongs to the TRAFAC class translation factor GTPase superfamily. Classic translation factor GTPase family. PrfC subfamily.

Its subcellular location is the cytoplasm. Functionally, increases the formation of ribosomal termination complexes and stimulates activities of RF-1 and RF-2. It binds guanine nucleotides and has strong preference for UGA stop codons. It may interact directly with the ribosome. The stimulation of RF-1 and RF-2 is significantly reduced by GTP and GDP, but not by GMP. This is Peptide chain release factor 3 from Aromatoleum aromaticum (strain DSM 19018 / LMG 30748 / EbN1) (Azoarcus sp. (strain EbN1)).